The chain runs to 1959 residues: Zinc finger protein hangover (1959 aa).

The 77-residue stretch at 79-155 (NCCRLCIAPQ…FSSQAKQRQW (77 aa)) folds into the ZAD domain. Zn(2+) is bound by residues Cys81, Cys84, Cys128, and Cys131. Positions 178–208 (GFFDQHLHQQQQHHQHLENELEAEKEKATPT) are disordered. Positions 192–205 (QHLENELEAEKEKA) are enriched in basic and acidic residues. The residue at position 228 (Ser228) is a Phosphoserine. Phosphothreonine is present on Thr246. A C2H2-type 1 zinc finger spans residues 318–341 (ASCRACSLQFSTRANARRHERNLH). A C2H2-type 2; degenerate zinc finger spans residues 447–469 (MTCRCCNKYFSTYKNFMAHVRKK). Residues 581–604 (YECKLCPKGFRTKHEFRTHVYDKH) form a C2H2-type 3 zinc finger. The segment at 674–762 (AVSDNASTTG…ANRDASAPKS (89 aa)) is disordered. Residues 677-693 (DNASTTGSGMARSNSME) show a composition bias toward polar residues. Ser680 carries the phosphoserine modification. 2 stretches are compositionally biased toward low complexity: residues 716–727 (SSSAAPPLTSTP) and 741–759 (TSASAAAAAQSSANRDASA). C2H2-type zinc fingers lie at residues 770–793 (QVCPICGQQYNNYNNVLRHMESKH) and 801–824 (YKCVRCGLGYPRISYLREHMINVH). Residues Ser832, Ser894, Ser895, Ser898, and Ser899 each carry the phosphoserine modification. Residues 908–930 (KECPICNAVFSNNIGLSNHMRSH) form a C2H2-type 6 zinc finger. The tract at residues 960–991 (TDSELGVGGTMSESAPATPANVPPAMANQTPQ) is disordered. 5 consecutive C2H2-type zinc fingers follow at residues 1011 to 1034 (MRCRICQRRFSSKKSYRYHMLTDH), 1042 to 1065 (IKCKLCNAEFAYEKGLKVHLFKVH), 1078 to 1101 (FECDVCSIVYSSESELQQHKRSVH), 1154 to 1176 (YQCKYCPSNFNTNKKLAIHINSH), and 1184 to 1207 (YSCKDCGNVYSGRKSLWVHRYKKH). Over residues 1233–1253 (TPTCNRKPITSTGAHQQQDGQ) the composition is skewed to polar residues. The disordered stretch occupies residues 1233-1301 (TPTCNRKPIT…GNGTTVGVAS (69 aa)). The span at 1255–1267 (HSHHTAKRTIFRH) shows a compositional bias: basic residues. Positions 1271–1283 (DDDDEEDDDEQQQ) are enriched in acidic residues. C2H2-type zinc fingers lie at residues 1318–1340 (VACTICGARFTDQEHFSKHIQKH) and 1375–1397 (YACDLCAKTFPQVIALKVHRKWH). Low complexity predominate over residues 1445–1467 (QQSLNNSCNSSMNHNNNSSSNRS). A disordered region spans residues 1445–1471 (QQSLNNSCNSSMNHNNNSSSNRSKSMK). 2 consecutive C2H2-type zinc fingers follow at residues 1476–1499 (LKCEYCASTFISNNNLRRHMYELH) and 1552–1574 (WGCDLCGEYLSRKEKLMNHINNH). A disordered region spans residues 1627–1865 (AAGATTTDKL…STGERRKKAV (239 aa)). The span at 1639–1695 (PDEEDSDDLDEDSSGDDDDSSGTGDDDDDDDSDDDEDGEGEDEDEEGDGGEGEDEEG) shows a compositional bias: acidic residues. Residues 1697–1715 (QPPAQLLPQQQHKTDLNLN) are compositionally biased toward low complexity. 2 stretches are compositionally biased toward acidic residues: residues 1716-1758 (QDDD…EEPE) and 1782-1829 (SDDE…EDEP). Over residues 1833–1851 (STASFSESESSTTTTSNSH) the composition is skewed to low complexity. The C2H2-type 16 zinc finger occupies 1873–1895 (FTCDLCQLCFDSQELLQSHIKSH). The segment at 1933-1959 (PDSKSAVLANNNNSKTSSKTVAAGATN) is disordered. Residues 1942 to 1952 (NNNNSKTSSKT) show a composition bias toward low complexity.

As to expression, expressed ubiquitously in the nervous system, in neurons not glia.

Its subcellular location is the nucleus. Required for normal development of ethanol tolerance. Relies on two distinct molecular pathways: a cellular stress pathway defined by hang, and a parallel pathway requiring octopamine. This Drosophila melanogaster (Fruit fly) protein is Zinc finger protein hangover (hang).